The primary structure comprises 65 residues: Potassium channel toxin kappa-KTx 2.6 (65 aa).

An N-terminal signal peptide occupies residues 1-27; the sequence is MKTSKMICAFLLVLVVGTFNDISGAYG. Residues 28–39 constitute a propeptide that is removed on maturation; that stretch reads EYVEDQHSFKIE. Intrachain disulfides connect Cys45–Cys63 and Cys49–Cys59.

It belongs to the short scorpion toxin superfamily. Potassium channel inhibitor kappa-KTx family. Kappa-KTx 2 subfamily. In terms of tissue distribution, expressed by the venom gland.

The protein localises to the secreted. Potassium channel inhibitor (Kv). This is Potassium channel toxin kappa-KTx 2.6 from Opisthacanthus cayaporum (South American scorpion).